The primary structure comprises 261 residues: Proteasome assembly chaperone 2 (261 aa).

The protein belongs to the PSMG2 family. Forms a heterodimer with psmg1. Degraded by the proteasome upon completion of 20S proteasome maturation.

Its subcellular location is the nucleus. Its function is as follows. Chaperone protein which promotes assembly of the 20S proteasome as part of a heterodimer with psmg1. The sequence is that of Proteasome assembly chaperone 2 from Xenopus tropicalis (Western clawed frog).